A 770-amino-acid polypeptide reads, in one-letter code: Amyloid-beta precursor protein (770 aa).

The first 17 residues, 1–17, serve as a signal peptide directing secretion; sequence MLPGLALLLLAAWTARA. The Extracellular segment spans residues 18 to 701; sequence LEVPTDGNAG…AEDVGSNKGA (684 aa). Residues 28–123 are GFLD subdomain; that stretch reads LLAEPQIAMF…PYRCLVGEFV (96 aa). An E1 domain is found at 28 to 189; the sequence is LLAEPQIAMF…RGVEFVCCPL (162 aa). Disulfide bonds link Cys38–Cys62, Cys73–Cys117, Cys98–Cys105, Cys133–Cys187, Cys144–Cys174, and Cys158–Cys186. Residue 96-110 participates in heparin binding; the sequence is NWCKRGRKQCKTHPH. The tract at residues 131–189 is cuBD subdomain; it reads DKCKFLHQERMDVCETHLHWHTVAKETCSEKSTNLHDYGMLLPCGIDKFRGVEFVCCPL. Cu(2+) contacts are provided by His147, His151, and Tyr168. The segment at 181–188 is zinc-binding; sequence GVEFVCCP. Residues Glu183, Cys186, and Cys187 each coordinate Zn(2+). Residues 194 to 207 show a composition bias toward acidic residues; it reads DNVDSADAEEDDSD. Residues 194 to 284 are disordered; it reads DNVDSADAEE…TTTTTTESVE (91 aa). Position 198 is a phosphoserine; by CK2 (Ser198). Ser206 carries the post-translational modification Phosphoserine; by CK1. 2 positions are modified to sulfotyrosine: Tyr217 and Tyr262. Over residues 228–264 the composition is skewed to acidic residues; that stretch reads VAEEEEVAEVEEEEADDDEDDEDGDEVEEEAEEPYEE. The span at 268-281 shows a compositional bias: low complexity; the sequence is RTTSIATTTTTTTE. Intrachain disulfides connect Cys291–Cys341, Cys300–Cys324, and Cys316–Cys337. In terms of domain architecture, BPTI/Kunitz inhibitor spans 291 to 341; the sequence is CSEQAETGPCRAMISRWYFDVTEGKCAPFFYGGCGGNRNNFDTEEYCMAVC. Tyr336 is modified (sulfotyrosine). The short motif at 344–365 is the OX-2 element; sequence VMSQSLRKTTREPLTRDPVKLP. One can recognise an E2 domain in the interval 374 to 565; the sequence is AVDKYLETPG…EEIQDEVDEL (192 aa). Positions 391 to 423 are heparin-binding; the sequence is FQKAKERLEAKHRERMSQVMREWEEAERQAKNL. Ser441 carries the phosphoserine modification. The tract at residues 491–522 is heparin-binding; sequence FNMLKKYVRAEQKDRQHTLKHFEHVRMVDPKK. Tyr497 bears the Phosphotyrosine mark. The tract at residues 523–540 is collagen-binding; sequence AAQIRSQVMTHLRVIYER. 2 N-linked (GlcNAc...) asparagine glycosylation sites follow: Asn542 and Asn571. Positions 677, 681, 684, and 685 each coordinate Cu(2+). The Zn(2+) site is built by His677, Tyr681, His684, and His685. Positions 695 to 722 are interaction with PSEN1; that stretch reads VGSNKGAIIGLMVGGVVIATVIVITLVM. A helical membrane pass occupies residues 702 to 722; that stretch reads IIGLMVGGVVIATVIVITLVM. Over 723–770 the chain is Cytoplasmic; it reads LKKKQYTSIHHGVVEVDAAVTPEERHLSKMQQNGYENPTYKFFEQMQN. The short motif at 724–734 is the Basolateral sorting signal element; the sequence is KKKQYTSIHHG. Phosphothreonine is present on Thr729. Phosphoserine; by APP-kinase I is present on Ser730. Residues 732 to 751 are interaction with G(o)-alpha; sequence HHGVVEVDAAVTPEERHLSK. At Thr743 the chain carries Phosphothreonine; by CDK5 and MAPK10. The tract at residues 756–770 is required for the interaction with KIF5B and for anterograde transport in axons; that stretch reads GYENPTYKFFEQMQN. A Phosphotyrosine; by ABL1 modification is found at Tyr757. The short motif at 757–762 is the YENPXY motif; contains endocytosis signal element; sequence YENPTY. A Glycyl lysine isopeptide (Lys-Gly) (interchain with G-Cter in ubiquitin) cross-link involves residue Lys763.

Belongs to the APP family. In terms of assembly, binds, via its C-terminus, to the PID domain of several cytoplasmic proteins, including APBB family members, the APBA family, MAPK8IP1, SHC1 and NUMB and DAB1. Binding to DAB1 inhibits its serine phosphorylation. Interacts (via NPXY motif) with DAB2 (via PID domain); the interaction is impaired by tyrosine phosphorylation of the NPXY motif. Also interacts with GPCR-like protein BPP, APPBP1, IB1, KNS2 (via its TPR domains), APPBP2 (via BaSS) and DDB1. In vitro, it binds MAPT via the MT-binding domains. Associates with microtubules in the presence of ATP and in a kinesin-dependent manner. Interacts, through a C-terminal domain, with GNAO1. Amyloid-beta protein 42 binds CHRNA7 in hippocampal neurons. Amyloid-beta associates with HADH2. Interacts with CPEB1, ANKS1B and AGER. Interacts with ITM2B. Interacts with ITM2C. Interacts with IDE. Can form homodimers; dimerization is enhanced in the presence of Cu(2+) ions. Can form homodimers; this is promoted by heparin binding. Amyloid-beta protein 40 interacts with S100A9. CTF-alpha product of APP interacts with GSAP. Isoform APP695 interacts with SORL1 (via N-terminal ectodomain); this interaction retains APP in the trans-Golgi network and reduces processing into soluble APP-alpha and amyloid-beta peptides. Isoform APP770 interacts with SORL1. The C99 fragment also interacts with SORL1. Interacts with PLD3. Interacts with VDAC1. Interacts with NSG1; could regulate APP processing. Amyloid-beta protein 42 interacts with FPR2. Interacts (via transmembrane region) with PSEN1; the interaction is direct. Interacts with LRRK2. Interacts (via cytoplasmic domain) with KIF5B. Interacts (via C-terminus) with APBB2/FE65L1 (via C-terminus). Interacts (via intracellular domain) with APBB3. Proteolytically processed under normal cellular conditions. Cleavage either by alpha-secretase, beta-secretase or theta-secretase leads to generation and extracellular release of soluble APP peptides, S-APP-alpha and S-APP-beta, and the retention of corresponding membrane-anchored C-terminal fragments, C80, C83 and C99. Subsequent processing of C80 and C83 by gamma-secretase yields P3 peptides. This is the major secretory pathway and is non-amyloidogenic. Alternatively, presenilin/nicastrin-mediated gamma-secretase processing of C99 releases the amyloid-beta proteins, amyloid-beta protein 40 and amyloid-beta protein 42, major components of amyloid plaques, and the cytotoxic C-terminal fragments, gamma-CTF(50), gamma-CTF(57) and gamma-CTF(59). PSEN1 cleavage is more efficient with C83 than with C99 as substrate (in vitro). Amyloid-beta protein 40 and Amyloid-beta protein 42 are cleaved by ACE. Many other minor amyloid-beta peptides, amyloid-beta 1-X peptides, are found in cerebral spinal fluid (CSF) including the amyloid-beta X-15 peptides, produced from the cleavage by alpha-secretase. Post-translationally, proteolytically cleaved by caspases during neuronal apoptosis. Cleavage at Asp-739 by either caspase-3, -8 or -9 results in the production of the neurotoxic C31 peptide and the increased production of amyloid-beta peptides. In terms of processing, N- and O-glycosylated. Phosphorylation in the C-terminal on tyrosine, threonine and serine residues is neuron-specific. Phosphorylation can affect APP processing, neuronal differentiation and interaction with other proteins. Phosphorylated on Thr-743 in neuronal cells by Cdc5 kinase and Mapk10, in dividing cells by Cdc2 kinase in a cell-cycle dependent manner with maximal levels at the G2/M phase and, in vitro, by GSK-3-beta. The Thr-743 phosphorylated form causes a conformational change which reduces binding of Fe65 family members. In dopaminergic (DA) neurons, phosphorylation on Thr-743 by LRKK2 promotes the production and the nuclear translocation of the APP intracellular domain (AICD) which induces DA neuron apoptosis. Phosphorylation on Tyr-757 is required for SHC binding. Phosphorylated in the extracellular domain by casein kinases on both soluble and membrane-bound APP. This phosphorylation is inhibited by heparin. Post-translationally, trophic-factor deprivation triggers the cleavage of surface APP by beta-secretase to release sAPP-beta which is further cleaved to release an N-terminal fragment of APP (N-APP). In terms of processing, amyloid-beta peptides are degraded by IDE. Sulfated on tyrosine residues.

The protein localises to the cell membrane. The protein resides in the membrane. Its subcellular location is the perikaryon. It is found in the cell projection. It localises to the growth cone. The protein localises to the clathrin-coated pit. The protein resides in the early endosome. Its subcellular location is the cytoplasmic vesicle. It is found in the endoplasmic reticulum. It localises to the golgi apparatus. The protein localises to the secreted. The protein resides in the cell surface. Its subcellular location is the nucleus. It is found in the cytoplasm. In terms of biological role, functions as a cell surface receptor and performs physiological functions on the surface of neurons relevant to neurite growth, neuronal adhesion and axonogenesis. Interaction between APP molecules on neighboring cells promotes synaptogenesis. Involved in cell mobility and transcription regulation through protein-protein interactions. Can promote transcription activation through binding to APBB1-KAT5 and inhibit Notch signaling through interaction with Numb. Couples to apoptosis-inducing pathways such as those mediated by G(o) and JIP. Inhibits G(o)-alpha ATPase activity. Acts as a kinesin I membrane receptor, mediating the axonal transport of beta-secretase and presenilin 1. By acting as a kinesin I membrane receptor, plays a role in axonal anterograde transport of cargo towards synapses in axons. May be involved in copper homeostasis/oxidative stress through copper ion reduction. In vitro, copper-metallated APP induces neuronal death directly or is potentiated through Cu(2+)-mediated low-density lipoprotein oxidation. Can regulate neurite outgrowth through binding to components of the extracellular matrix such as heparin and collagen I and IV. Induces a AGER-dependent pathway that involves activation of p38 MAPK, resulting in internalization of amyloid-beta peptide and mitochondrial dysfunction in cultured cortical neurons. Provides Cu(2+) ions for GPC1 which are required for release of nitric oxide (NO) and subsequent degradation of the heparan sulfate chains on GPC1. Amyloid-beta peptides are lipophilic metal chelators with metal-reducing activity. Binds transient metals such as copper, zinc and iron. Its function is as follows. The gamma-CTF peptides as well as the caspase-cleaved peptides, including C31, are potent enhancers of neuronal apoptosis. The sequence is that of Amyloid-beta precursor protein from Macaca fascicularis (Crab-eating macaque).